The chain runs to 336 residues: Thiamine thiazole synthase (336 aa).

Residues alanine 89, glutamate 110 to serine 111, glycine 118, and cysteine 183 each bind substrate. At cysteine 219 the chain carries 2,3-didehydroalanine (Cys). Substrate-binding positions include aspartate 221, histidine 236, methionine 288, and arginine 298 to glycine 300.

The protein belongs to the THI4 family. Homooctamer. It depends on Fe cation as a cofactor. Post-translationally, during the catalytic reaction, a sulfide is transferred from Cys-219 to a reaction intermediate, generating a dehydroalanine residue.

The protein resides in the cytoplasm. The protein localises to the nucleus. The catalysed reaction is [ADP-thiazole synthase]-L-cysteine + glycine + NAD(+) = [ADP-thiazole synthase]-dehydroalanine + ADP-5-ethyl-4-methylthiazole-2-carboxylate + nicotinamide + 3 H2O + 2 H(+). In terms of biological role, involved in biosynthesis of the thiamine precursor thiazole. Catalyzes the conversion of NAD and glycine to adenosine diphosphate 5-(2-hydroxyethyl)-4-methylthiazole-2-carboxylic acid (ADT), an adenylated thiazole intermediate. The reaction includes an iron-dependent sulfide transfer from a conserved cysteine residue of the protein to a thiazole intermediate. The enzyme can only undergo a single turnover, which suggests it is a suicide enzyme. May have additional roles in adaptation to various stress conditions and in DNA damage tolerance. This is Thiamine thiazole synthase from Puccinia graminis f. sp. tritici (strain CRL 75-36-700-3 / race SCCL) (Black stem rust fungus).